Consider the following 366-residue polypeptide: Histidinol-phosphate aminotransferase (366 aa).

K227 carries the post-translational modification N6-(pyridoxal phosphate)lysine.

This sequence belongs to the class-II pyridoxal-phosphate-dependent aminotransferase family. Histidinol-phosphate aminotransferase subfamily. As to quaternary structure, homodimer. It depends on pyridoxal 5'-phosphate as a cofactor.

The enzyme catalyses L-histidinol phosphate + 2-oxoglutarate = 3-(imidazol-4-yl)-2-oxopropyl phosphate + L-glutamate. The protein operates within amino-acid biosynthesis; L-histidine biosynthesis; L-histidine from 5-phospho-alpha-D-ribose 1-diphosphate: step 7/9. The protein is Histidinol-phosphate aminotransferase of Campylobacter hominis (strain ATCC BAA-381 / DSM 21671 / CCUG 45161 / LMG 19568 / NCTC 13146 / CH001A).